The following is a 359-amino-acid chain: GTPase Obg (359 aa).

The 159-residue stretch at 1-159 (MQFIDQAEIQ…RSLRLELKLL (159 aa)) folds into the Obg domain. The region spanning 160-328 (AEVGIIGLPN…LLHQIWQELE (169 aa)) is the OBG-type G domain. Residues 166 to 173 (GLPNAGKS), 191 to 195 (FTTLV), 213 to 216 (DIPG), 280 to 283 (NKID), and 309 to 311 (SAI) contribute to the GTP site. Mg(2+) is bound by residues serine 173 and threonine 193.

Belongs to the TRAFAC class OBG-HflX-like GTPase superfamily. OBG GTPase family. Monomer. Mg(2+) is required as a cofactor.

The protein localises to the cytoplasm. In terms of biological role, an essential GTPase which binds GTP, GDP and possibly (p)ppGpp with moderate affinity, with high nucleotide exchange rates and a fairly low GTP hydrolysis rate. Plays a role in control of the cell cycle, stress response, ribosome biogenesis and in those bacteria that undergo differentiation, in morphogenesis control. This Cyanothece sp. (strain PCC 7425 / ATCC 29141) protein is GTPase Obg.